Consider the following 68-residue polypeptide: Large ribosomal subunit protein bL33c (68 aa).

It belongs to the bacterial ribosomal protein bL33 family.

It is found in the plastid. It localises to the chloroplast. The chain is Large ribosomal subunit protein bL33c from Lactuca sativa (Garden lettuce).